The following is a 425-amino-acid chain: GPI mannosyltransferase 1 (425 aa).

Helical transmembrane passes span 11 to 31, 85 to 105, 144 to 164, 166 to 186, 233 to 253, 295 to 315, 340 to 360, 367 to 387, and 398 to 418; these read VIGASIALRAVLLVYGAWQDA, FFAFGKALFALADVVAGWLIA, LLGVLVVGLLWAVLSRRVSLA, VILGLGVHFKIYPFIYGPAVV, IHLTLVALATFSALNVSMYIL, FESLAFIPQLLLSVVVIPLVL, SQYFLWYLIFLPFYLPSSSLM, ILVGLLWVIAQALWLQQGYNL, and GLFLASLFFFAVNVWILGIIV.

The protein belongs to the PIGM family.

Its subcellular location is the endoplasmic reticulum membrane. It functions in the pathway glycolipid biosynthesis; glycosylphosphatidylinositol-anchor biosynthesis. In terms of biological role, mannosyltransferase involved in glycosylphosphatidylinositol-anchor biosynthesis. Transfers the first alpha-1,4-mannose to GlcN-acyl-PI during GPI precursor assembly. Required for cell wall integrity. This chain is GPI mannosyltransferase 1 (gpi14), found in Aspergillus fumigatus (strain ATCC MYA-4609 / CBS 101355 / FGSC A1100 / Af293) (Neosartorya fumigata).